Reading from the N-terminus, the 406-residue chain is Calreticulin (406 aa).

A signal peptide spans 1–17 (MMWCKTVIVLLATVGFI). The cysteines at positions 105 and 137 are disulfide-linked. Tyr-109, Lys-111, Tyr-128, and Asp-135 together coordinate an alpha-D-glucoside. 7 repeat units span residues 191–202 (VESGNLEDDWDF), 210–221 (DPTATKPEDWDD), 227–238 (DPDDKKPEDWDK), 244–255 (DPDATKPEDWDD), 259–269 (GEWEPPMIDNP), 273–283 (GEWQPKQLDNP), and 287–297 (GAWEHPEIANP). The segment at 191–255 (VESGNLEDDW…DATKPEDWDD (65 aa)) is 4 X approximate repeats. Residues 207-251 (KIKDPTATKPEDWDDRATIPDPDDKKPEDWDKPEHIPDPDATKPE) show a composition bias toward basic and acidic residues. Residues 207–259 (KIKDPTATKPEDWDDRATIPDPDDKKPEDWDKPEHIPDPDATKPEDWDDEMDG) form a disordered region. The segment at 259-297 (GEWEPPMIDNPEFKGEWQPKQLDNPNYKGAWEHPEIANP) is 3 X approximate repeats. Asp-317 serves as a coordination point for an alpha-D-glucoside. Positions 347 to 406 (KNTQAGEKKMKEAQDEVQRKKDEEEAKKASDKDDEDEDDDDEEKDDESKQDKDQSEHDEL) are disordered. Residues 352 to 377 (GEKKMKEAQDEVQRKKDEEEAKKASD) show a composition bias toward basic and acidic residues. Residues 378–391 (KDDEDEDDDDEEKD) show a composition bias toward acidic residues. Over residues 392–406 (DESKQDKDQSEHDEL) the composition is skewed to basic and acidic residues.

This sequence belongs to the calreticulin family.

Its subcellular location is the endoplasmic reticulum lumen. Its function is as follows. Molecular calcium-binding chaperone promoting folding, oligomeric assembly and quality control in the ER via the calreticulin/calnexin cycle. This lectin may interact transiently with almost all of the monoglucosylated glycoproteins that are synthesized in the ER. The chain is Calreticulin from Drosophila melanogaster (Fruit fly).